The chain runs to 250 residues: ATP synthase subunit a (250 aa).

The next 6 helical transmembrane spans lie at 29–49 (ASLFMAASAAVAVGFLYFATS), 84–104 (FFPLVFSLFMFVLTANLLGMF), 114–134 (IIVTFALAILVIGTVLVYGFY), 143–163 (VFVPSGVPGILLPLVVAIEII), 193–213 (FVASLGALGAVGVGGAVLPLI), and 216–236 (VALTGLEFLVAFLQAYVFAVL).

It belongs to the ATPase A chain family. In terms of assembly, F-type ATPases have 2 components, CF(1) - the catalytic core - and CF(0) - the membrane proton channel. CF(1) has five subunits: alpha(3), beta(3), gamma(1), delta(1), epsilon(1). CF(0) has three main subunits: a(1), b(2) and c(9-12). The alpha and beta chains form an alternating ring which encloses part of the gamma chain. CF(1) is attached to CF(0) by a central stalk formed by the gamma and epsilon chains, while a peripheral stalk is formed by the delta and b chains.

Its subcellular location is the cell inner membrane. Functionally, key component of the proton channel; it plays a direct role in the translocation of protons across the membrane. This is ATP synthase subunit a from Rhizobium etli (strain CIAT 652).